A 639-amino-acid chain; its full sequence is Chaperone protein DnaK (639 aa).

Residue threonine 197 is modified to Phosphothreonine; by autocatalysis. The disordered stretch occupies residues 600-639 (SGAQGGAQAGPDMNAGQSNAGQNNGKQDDNVQDADFEEVK). Over residues 613-624 (NAGQSNAGQNNG) the composition is skewed to low complexity. Over residues 629 to 639 (NVQDADFEEVK) the composition is skewed to acidic residues.

It belongs to the heat shock protein 70 family.

Functionally, acts as a chaperone. This is Chaperone protein DnaK from Bacteroides fragilis (strain ATCC 25285 / DSM 2151 / CCUG 4856 / JCM 11019 / LMG 10263 / NCTC 9343 / Onslow / VPI 2553 / EN-2).